The primary structure comprises 337 residues: Anthranilate phosphoribosyltransferase (337 aa).

5-phospho-alpha-D-ribose 1-diphosphate is bound by residues Gly-81, 84 to 85, Ser-89, 91 to 94, 109 to 117, and Ala-121; these read GD, NVST, and KHGNRAATS. Anthranilate is bound at residue Gly-81. Ser-93 is a Mg(2+) binding site. Asn-112 is an anthranilate binding site. Arg-167 contributes to the anthranilate binding site. Residues Asp-226 and Glu-227 each contribute to the Mg(2+) site.

Belongs to the anthranilate phosphoribosyltransferase family. Homodimer. Requires Mg(2+) as cofactor.

It carries out the reaction N-(5-phospho-beta-D-ribosyl)anthranilate + diphosphate = 5-phospho-alpha-D-ribose 1-diphosphate + anthranilate. Its pathway is amino-acid biosynthesis; L-tryptophan biosynthesis; L-tryptophan from chorismate: step 2/5. Functionally, catalyzes the transfer of the phosphoribosyl group of 5-phosphorylribose-1-pyrophosphate (PRPP) to anthranilate to yield N-(5'-phosphoribosyl)-anthranilate (PRA). The sequence is that of Anthranilate phosphoribosyltransferase from Methylorubrum extorquens (strain CM4 / NCIMB 13688) (Methylobacterium extorquens).